The sequence spans 65 residues: Putative antitoxin MJECL31 (65 aa).

The protein belongs to the UPF0165 family.

Functionally, possibly the antitoxin component of a type II toxin-antitoxin (TA) system. In Methanocaldococcus jannaschii (strain ATCC 43067 / DSM 2661 / JAL-1 / JCM 10045 / NBRC 100440) (Methanococcus jannaschii), this protein is Putative antitoxin MJECL31.